We begin with the raw amino-acid sequence, 488 residues long: Proline--tRNA ligase (488 aa).

This sequence belongs to the class-II aminoacyl-tRNA synthetase family. ProS type 3 subfamily. As to quaternary structure, homodimer.

The protein localises to the cytoplasm. The enzyme catalyses tRNA(Pro) + L-proline + ATP = L-prolyl-tRNA(Pro) + AMP + diphosphate. Its function is as follows. Catalyzes the attachment of proline to tRNA(Pro) in a two-step reaction: proline is first activated by ATP to form Pro-AMP and then transferred to the acceptor end of tRNA(Pro). This is Proline--tRNA ligase from Borreliella burgdorferi (strain ZS7) (Borrelia burgdorferi).